A 553-amino-acid polypeptide reads, in one-letter code: Dihydroxy-acid dehydratase (553 aa).

Asp78 serves as a coordination point for Mg(2+). Cys119 serves as a coordination point for [2Fe-2S] cluster. The Mg(2+) site is built by Asp120 and Lys121. The residue at position 121 (Lys121) is an N6-carboxylysine. Cys193 is a binding site for [2Fe-2S] cluster. A Mg(2+)-binding site is contributed by Glu441. Ser467 acts as the Proton acceptor in catalysis.

The protein belongs to the IlvD/Edd family. As to quaternary structure, homodimer. [2Fe-2S] cluster serves as cofactor. It depends on Mg(2+) as a cofactor.

It carries out the reaction (2R)-2,3-dihydroxy-3-methylbutanoate = 3-methyl-2-oxobutanoate + H2O. The enzyme catalyses (2R,3R)-2,3-dihydroxy-3-methylpentanoate = (S)-3-methyl-2-oxopentanoate + H2O. It participates in amino-acid biosynthesis; L-isoleucine biosynthesis; L-isoleucine from 2-oxobutanoate: step 3/4. It functions in the pathway amino-acid biosynthesis; L-valine biosynthesis; L-valine from pyruvate: step 3/4. Functions in the biosynthesis of branched-chain amino acids. Catalyzes the dehydration of (2R,3R)-2,3-dihydroxy-3-methylpentanoate (2,3-dihydroxy-3-methylvalerate) into 2-oxo-3-methylpentanoate (2-oxo-3-methylvalerate) and of (2R)-2,3-dihydroxy-3-methylbutanoate (2,3-dihydroxyisovalerate) into 2-oxo-3-methylbutanoate (2-oxoisovalerate), the penultimate precursor to L-isoleucine and L-valine, respectively. This chain is Dihydroxy-acid dehydratase, found in Geobacter metallireducens (strain ATCC 53774 / DSM 7210 / GS-15).